Reading from the N-terminus, the 98-residue chain is Large ribosomal subunit protein uL23 (98 aa).

This sequence belongs to the universal ribosomal protein uL23 family. As to quaternary structure, part of the 50S ribosomal subunit. Contacts protein L29, and trigger factor when it is bound to the ribosome.

In terms of biological role, one of the early assembly proteins it binds 23S rRNA. One of the proteins that surrounds the polypeptide exit tunnel on the outside of the ribosome. Forms the main docking site for trigger factor binding to the ribosome. This Herpetosiphon aurantiacus (strain ATCC 23779 / DSM 785 / 114-95) protein is Large ribosomal subunit protein uL23.